The sequence spans 128 residues: SGSCTTQTCWLQLPEFREVGNYLKEKYHRALKVDLLRGAGNSAASRGAIAETFSSISRKELVHLEDSPDYCLENRTLGLPGTEGRECLKKGKNLSKWEKRSCKRLCGECGLAVEERKAEMVSSCNCKF.

The O-palmitoleoyl serine moiety is linked to residue Ser1. 2 cysteine pairs are disulfide-bonded: Cys71–Cys109 and Cys87–Cys102. Residues Asn74 and Asn93 are each glycosylated (N-linked (GlcNAc...) asparagine).

The protein belongs to the Wnt family. Post-translationally, palmitoleoylation is required for efficient binding to frizzled receptors. Depalmitoleoylation leads to Wnt signaling pathway inhibition. Proteolytic processing by tiki1 and tiki2 promotes oxidation and formation of large disulfide-bond oligomers, leading to inactivation of wnt8.

The protein localises to the secreted. It is found in the extracellular space. Its subcellular location is the extracellular matrix. Ligand for members of the frizzled family of seven transmembrane receptors. Probable developmental protein. May be a signaling molecule which affects the development of discrete regions of tissues. Is likely to signal over only few cell diameters. This is Protein Wnt-8 (wnt8) from Thunnus thynnus (Atlantic bluefin tuna).